A 284-amino-acid polypeptide reads, in one-letter code: Nucleotide-binding protein NGK_0463 (284 aa).

8–15 (GLSGSGKS) contributes to the ATP binding site. Residue 58–61 (DVRS) participates in GTP binding.

Belongs to the RapZ-like family.

In terms of biological role, displays ATPase and GTPase activities. The sequence is that of Nucleotide-binding protein NGK_0463 from Neisseria gonorrhoeae (strain NCCP11945).